We begin with the raw amino-acid sequence, 173 residues long: Probable chemoreceptor glutamine deamidase CheD (173 aa).

It belongs to the CheD family.

It carries out the reaction L-glutaminyl-[protein] + H2O = L-glutamyl-[protein] + NH4(+). Its function is as follows. Probably deamidates glutamine residues to glutamate on methyl-accepting chemotaxis receptors (MCPs), playing an important role in chemotaxis. The sequence is that of Probable chemoreceptor glutamine deamidase CheD from Haloarcula marismortui (strain ATCC 43049 / DSM 3752 / JCM 8966 / VKM B-1809) (Halobacterium marismortui).